The sequence spans 66 residues: MPGVYLEESDNFDVALRRFKKQVEKSGILSELKKRQHFEKPSVMRKKKKAAARKRLLKKMRKINMM.

This sequence belongs to the bacterial ribosomal protein bS21 family.

In Solidesulfovibrio magneticus (strain ATCC 700980 / DSM 13731 / RS-1) (Desulfovibrio magneticus), this protein is Small ribosomal subunit protein bS21.